We begin with the raw amino-acid sequence, 424 residues long: O-seryl-dTMP PLP-dependent decarboxylase (424 aa).

This sequence belongs to the pyridoxal-phosphate-dependent aminodecarboxylase family.

It catalyses the reaction 5-O-(L-seryl)-dTMP in DNA + H(+) = 5-aminoethoxy-methyl-dUMP in DNA + CO2. Its function is as follows. Converts 5-O-serinylthymidine (O-SerT) into 5-aminoethoxy-2'-deoxymethyluridine (5-NeOmdU) as a step in the pathway leading to thymidine hypermodifications in the viral genome. As a final result of the pathway of hypermodification, 5-NeOmdU substitutes for about 40% of the thymidines in the viral DNA. These modifications probably prevent degradation of viral genome by the host restriction-modification antiviral defense system. This is O-seryl-dTMP PLP-dependent decarboxylase from Salmonella phage ViI.